The chain runs to 243 residues: tRNA pseudouridine synthase A (243 aa).

The active-site Nucleophile is Asp-54. Tyr-112 lines the substrate pocket.

Belongs to the tRNA pseudouridine synthase TruA family. Homodimer.

It catalyses the reaction uridine(38/39/40) in tRNA = pseudouridine(38/39/40) in tRNA. Formation of pseudouridine at positions 38, 39 and 40 in the anticodon stem and loop of transfer RNAs. This Aster yellows witches'-broom phytoplasma (strain AYWB) protein is tRNA pseudouridine synthase A.